The sequence spans 483 residues: Glutamate--tRNA ligase (483 aa).

The 'HIGH' region signature appears at 11-21 (PSPTGLLHIGN). A 'KMSKS' region motif is present at residues 255-259 (KLSKR). Lys258 serves as a coordination point for ATP.

The protein belongs to the class-I aminoacyl-tRNA synthetase family. Glutamate--tRNA ligase type 1 subfamily. As to quaternary structure, monomer.

It localises to the cytoplasm. It catalyses the reaction tRNA(Glu) + L-glutamate + ATP = L-glutamyl-tRNA(Glu) + AMP + diphosphate. Its function is as follows. Catalyzes the attachment of glutamate to tRNA(Glu) in a two-step reaction: glutamate is first activated by ATP to form Glu-AMP and then transferred to the acceptor end of tRNA(Glu). The polypeptide is Glutamate--tRNA ligase (Lactococcus lactis subsp. cremoris (strain MG1363)).